Reading from the N-terminus, the 1152-residue chain is Nucleolar protein 6 (1152 aa).

Disordered regions lie at residues 1 to 30 (MPSA…DPEV) and 36 to 55 (EGMD…EPPA). Position 65 is a phosphoserine (Ser-65). Residues 92 to 128 (LLRLQVEELLKEVRLSEKKKERIDNFLKEVTKRIQKV) are a coiled coil. Residues Ser-292 and Ser-817 each carry the phosphoserine modification.

This sequence belongs to the NRAP family. As to quaternary structure, part of the small subunit (SSU) processome, composed of more than 70 proteins and the RNA chaperone small nucleolar RNA (snoRNA) U3. Interacts with RRP7A; required for NOL6 localization to nucleolus. In terms of tissue distribution, ubiquitously expressed.

The protein resides in the nucleus. Its subcellular location is the nucleolus. The protein localises to the chromosome. Part of the small subunit (SSU) processome, first precursor of the small eukaryotic ribosomal subunit. During the assembly of the SSU processome in the nucleolus, many ribosome biogenesis factors, an RNA chaperone and ribosomal proteins associate with the nascent pre-rRNA and work in concert to generate RNA folding, modifications, rearrangements and cleavage as well as targeted degradation of pre-ribosomal RNA by the RNA exosome. This Mus musculus (Mouse) protein is Nucleolar protein 6 (Nol6).